Here is a 287-residue protein sequence, read N- to C-terminus: Casein kinase II subunit beta-1 (287 aa).

Residues 1–97 (MYRDRGTVNS…ESDVSGSDGE (97 aa)) form a disordered region. Positions 13 to 25 (EVVDRKRINDALE) are enriched in basic and acidic residues. A compositionally biased stretch (low complexity) spans 41–50 (GTVTAATTTA). Over residues 78-97 (SDDESDTDSEESDVSGSDGE) the composition is skewed to acidic residues.

It belongs to the casein kinase 2 subunit beta family. In terms of assembly, heterotetramer of two catalytic alpha subunits and two regulatory beta subunits. Interacts with CCA1. Interacts with LHY. Phosphorylated by alpha subunit.

Its subcellular location is the cytoplasm. The protein resides in the cytosol. It is found in the nucleus. Plays a complex role in regulating the basal catalytic activity of the alpha subunit. The tetrameric holoenzyme CK2, composed of two alpha and two beta subunits, phosphorylates the transcription factor GBFl, resulting in stimulation of its DNA binding activity. CK2 phosphorylates the transcription factor PIF1 after an exposure to light, resulting in a proteasome-dependent degradation of PIF1 and promotion of photomorphogenesis. CK2 phosphorylates translation initiation factors. May participate in the regulation of the initiation of translation. Stimulates the binding of CCA1 to promoters. The protein is Casein kinase II subunit beta-1 (CKB1) of Arabidopsis thaliana (Mouse-ear cress).